We begin with the raw amino-acid sequence, 315 residues long: MEQWPLLFVVALCILQSSSKPMEKKDRVHHDAPLSNKDHDDEENFDYDHEAFLGQEEAKTFDQLTPEESKERLGKIVEKIDEDHDGFVTADEMKRWIKHAQRRWIYEDVDRQWQAHDLNSDSFVSWEEYKDATYGYILDEADPEDGFNYRQMMTRDERRFKMADQDGDLRANKEEFTAFLHPEEFDYMKDIVVLETMEDIDKNGDGLIDLNEYIGDMYSQNGDSSEPEWVKTEREQFTEFRDKNKDGRMDKDETRDWILPADYDHAEAEAKHLLYESDADKDGRLTKQEIVDKYDLFVGSQATDFGDALVRHDEF.

The N-terminal stretch at 1–19 (MEQWPLLFVVALCILQSSS) is a signal peptide. Residues 22-39 (MEKKDRVHHDAPLSNKDH) are compositionally biased toward basic and acidic residues. The interval 22–42 (MEKKDRVHHDAPLSNKDHDDE) is disordered. EF-hand domains follow at residues 68-103 (ESKE…AQRR), 104-139 (WIYE…YILD), 151-186 (QMMT…EEFD), 188-223 (MKDI…QNGD), 229-264 (WVKT…ADYD), and 265-300 (HAEA…FVGS). Residues Asp81, Asp83, Asp85, Glu92, Asp117, Asn119, Asp121, Glu128, Asp164, Asp166, Asp168, Arg170, Glu175, Asp201, Asn203, Asp205, Glu212, Asp242, Asn244, Asp246, Arg248, Glu253, Asp278, Asp280, Asp282, Arg284, and Glu289 each contribute to the Ca(2+) site. The short motif at 312 to 315 (HDEF) is the Prevents secretion from ER element.

This sequence belongs to the CREC family. As to quaternary structure, interacts with ggcx.

The protein resides in the endoplasmic reticulum membrane. It is found in the golgi apparatus. It localises to the secreted. The protein localises to the melanosome. Its subcellular location is the sarcoplasmic reticulum lumen. In terms of biological role, involved in regulation of vitamin K-dependent carboxylation of multiple N-terminal glutamate residues. Seems to inhibit gamma-carboxylase ggcx. Binds 7 calcium ions with a low affinity. The protein is Calumenin-B (calub) of Danio rerio (Zebrafish).